Reading from the N-terminus, the 1466-residue chain is DNA-directed RNA polymerase subunit beta'' (1466 aa).

Positions 220, 296, 303, and 306 each coordinate Zn(2+). Residues 618–725 (TREEDLEDEY…EDEYDSSEED (108 aa)) are disordered. Composition is skewed to acidic residues over residues 621-631 (EDLEDEYETLE), 639-651 (DEYEYETLEDEYG), and 707-725 (LEEDLEEDSEDEYDSSEED).

Belongs to the RNA polymerase beta' chain family. RpoC2 subfamily. In plastids the minimal PEP RNA polymerase catalytic core is composed of four subunits: alpha, beta, beta', and beta''. When a (nuclear-encoded) sigma factor is associated with the core the holoenzyme is formed, which can initiate transcription. The cofactor is Zn(2+).

Its subcellular location is the plastid. It localises to the chloroplast. The enzyme catalyses RNA(n) + a ribonucleoside 5'-triphosphate = RNA(n+1) + diphosphate. Its function is as follows. DNA-dependent RNA polymerase catalyzes the transcription of DNA into RNA using the four ribonucleoside triphosphates as substrates. In Agrostis stolonifera (Creeping bentgrass), this protein is DNA-directed RNA polymerase subunit beta''.